The chain runs to 319 residues: Methionyl-tRNA formyltransferase (319 aa).

113 to 116 contributes to the (6S)-5,6,7,8-tetrahydrofolate binding site; the sequence is SLLP.

It belongs to the Fmt family.

The enzyme catalyses L-methionyl-tRNA(fMet) + (6R)-10-formyltetrahydrofolate = N-formyl-L-methionyl-tRNA(fMet) + (6S)-5,6,7,8-tetrahydrofolate + H(+). Attaches a formyl group to the free amino group of methionyl-tRNA(fMet). The formyl group appears to play a dual role in the initiator identity of N-formylmethionyl-tRNA by promoting its recognition by IF2 and preventing the misappropriation of this tRNA by the elongation apparatus. This Pseudomonas fluorescens (strain Pf0-1) protein is Methionyl-tRNA formyltransferase.